Here is a 763-residue protein sequence, read N- to C-terminus: Phosphoglycerol transferase I (763 aa).

Transmembrane regions (helical) follow at residues 1–21 (MSELLSVALFLASVLVYAWKA), 24–44 (NTWWFAATLTVLGLFVILNIT), 77–97 (ILPGIGIVLALVGVFGALGWI), and 108–128 (VGYSLLALLLALGSVDASPAF).

The protein belongs to the OpgB family.

Its subcellular location is the cell inner membrane. It catalyses the reaction a phosphatidylglycerol + a membrane-derived-oligosaccharide D-glucose = a 1,2-diacyl-sn-glycerol + a membrane-derived-oligosaccharide 6-(glycerophospho)-D-glucose.. It participates in glycan metabolism; osmoregulated periplasmic glucan (OPG) biosynthesis. In terms of biological role, transfers a phosphoglycerol residue from phosphatidylglycerol to the membrane-bound nascent glucan backbones. This is Phosphoglycerol transferase I from Salmonella arizonae (strain ATCC BAA-731 / CDC346-86 / RSK2980).